Here is a 1255-residue protein sequence, read N- to C-terminus: Cilia- and flagella-associated protein 337 B (1255 aa).

The region spanning 87 to 122 is the EF-hand domain; sequence KLVRCLTNLFEEIDLNGNGILEWDEFTNYVIEKATV. Positions 100, 102, 104, and 111 each coordinate Ca(2+). WD repeat units lie at residues 228–269, 282–322, 326–365, 368–407, 410–449, 496–536, 538–577, 580–624, 625–664, 669–708, 769–808, and 844–883; these read DLKT…WVLA, EFKN…KELE, AHTE…KKRV, EHTR…LIYK, GHSS…NVQC, VDDY…KIFS, VTQG…MIKA, KHSA…RTLE, LKDV…QNGS, TQYE…FKFQ, QQNL…TILE, and AHYE…LIDQ. Disordered stretches follow at residues 941–988 and 1140–1160; these read IKSL…NFNP and QQQV…QQPG. Positions 953–969 are enriched in low complexity; that stretch reads TQESSTQEQEAAQQPQQ. A compositionally biased stretch (polar residues) spans 1148 to 1160; it reads TEPSSNRSHQQPG.

This sequence belongs to the CFAP337 family. As to quaternary structure, associates with components of the nexin-dynein regulatory complex (N-DRC) and the CFAP184:CFAP263 complex.

It is found in the cell projection. The protein resides in the cilium. Associates with components of the nexin-dynein regulatory complex (N-DRC), a key regulator of ciliary/flagellar motility, and might act as an inner dynein arm (IDA) hub or linkage. The chain is Cilia- and flagella-associated protein 337 B from Tetrahymena thermophila (strain SB210).